Consider the following 63-residue polypeptide: Beta-insect depressant toxin Im-3 (63 aa).

The LCN-type CS-alpha/beta domain occupies 1 to 63 (KEGYGVGKDG…KVWESSTNTC (63 aa)). Cystine bridges form between Cys-11-Cys-63, Cys-15-Cys-37, Cys-22-Cys-44, and Cys-26-Cys-46.

This sequence belongs to the long (4 C-C) scorpion toxin superfamily. Sodium channel inhibitor family. Beta subfamily. In terms of tissue distribution, expressed by the venom gland.

It is found in the secreted. In terms of biological role, beta toxins bind voltage-independently at site-4 of sodium channels (Nav) and shift the voltage of activation toward more negative potentials thereby affecting sodium channel activation and promoting spontaneous and repetitive firing. Induces paralysis in cricket A.domestica but does not induce death. The protein is Beta-insect depressant toxin Im-3 of Isometrus maculatus (Lesser brown scorpion).